Consider the following 732-residue polypeptide: Phosphoribosylformylglycinamidine synthase subunit PurL (732 aa).

Residue His-42 is part of the active site. Residues Tyr-45 and Lys-84 each coordinate ATP. Glu-86 serves as a coordination point for Mg(2+). Substrate contacts are provided by residues 87-90 (SHNH) and Arg-109. The active-site Proton acceptor is His-88. Asp-110 lines the Mg(2+) pocket. A substrate-binding site is contributed by Gln-238. Asp-266 serves as a coordination point for Mg(2+). 310-312 (ESQ) contributes to the substrate binding site. 2 residues coordinate ATP: Asp-496 and Gly-533. Asn-534 is a binding site for Mg(2+). Ser-536 serves as a coordination point for substrate.

Belongs to the FGAMS family. Monomer. Part of the FGAM synthase complex composed of 1 PurL, 1 PurQ and 2 PurS subunits.

It localises to the cytoplasm. The enzyme catalyses N(2)-formyl-N(1)-(5-phospho-beta-D-ribosyl)glycinamide + L-glutamine + ATP + H2O = 2-formamido-N(1)-(5-O-phospho-beta-D-ribosyl)acetamidine + L-glutamate + ADP + phosphate + H(+). It functions in the pathway purine metabolism; IMP biosynthesis via de novo pathway; 5-amino-1-(5-phospho-D-ribosyl)imidazole from N(2)-formyl-N(1)-(5-phospho-D-ribosyl)glycinamide: step 1/2. Functionally, part of the phosphoribosylformylglycinamidine synthase complex involved in the purines biosynthetic pathway. Catalyzes the ATP-dependent conversion of formylglycinamide ribonucleotide (FGAR) and glutamine to yield formylglycinamidine ribonucleotide (FGAM) and glutamate. The FGAM synthase complex is composed of three subunits. PurQ produces an ammonia molecule by converting glutamine to glutamate. PurL transfers the ammonia molecule to FGAR to form FGAM in an ATP-dependent manner. PurS interacts with PurQ and PurL and is thought to assist in the transfer of the ammonia molecule from PurQ to PurL. This Campylobacter hominis (strain ATCC BAA-381 / DSM 21671 / CCUG 45161 / LMG 19568 / NCTC 13146 / CH001A) protein is Phosphoribosylformylglycinamidine synthase subunit PurL.